The sequence spans 81 residues: Sulfur carrier protein TusA (81 aa).

Residue C19 is the Cysteine persulfide intermediate of the active site.

The protein belongs to the sulfur carrier protein TusA family. Interacts with IscS.

It is found in the cytoplasm. Its pathway is tRNA modification. Sulfur carrier protein involved in sulfur trafficking in the cell. Part of a sulfur-relay system required for 2-thiolation during synthesis of 2-thiouridine of the modified wobble base 5-methylaminomethyl-2-thiouridine (mnm(5)s(2)U) in tRNA. Interacts with IscS and stimulates its cysteine desulfurase activity. Accepts an activated sulfur from IscS, which is then transferred to TusD, and thus determines the direction of sulfur flow from IscS to 2-thiouridine formation. Also appears to be involved in sulfur transfer for the biosynthesis of molybdopterin. The polypeptide is Sulfur carrier protein TusA (Escherichia fergusonii (strain ATCC 35469 / DSM 13698 / CCUG 18766 / IAM 14443 / JCM 21226 / LMG 7866 / NBRC 102419 / NCTC 12128 / CDC 0568-73)).